The chain runs to 304 residues: Large ribosomal subunit protein uL18y (304 aa).

It belongs to the universal ribosomal protein uL18 family. As to quaternary structure, component of the large ribosomal subunit (LSU).

The protein resides in the cytoplasm. It localises to the nucleus. In terms of biological role, component of the ribosome, a large ribonucleoprotein complex responsible for the synthesis of proteins in the cell. The small ribosomal subunit (SSU) binds messenger RNAs (mRNAs) and translates the encoded message by selecting cognate aminoacyl-transfer RNA (tRNA) molecules. The large subunit (LSU) contains the ribosomal catalytic site termed the peptidyl transferase center (PTC), which catalyzes the formation of peptide bonds, thereby polymerizing the amino acids delivered by tRNAs into a polypeptide chain. The nascent polypeptides leave the ribosome through a tunnel in the LSU and interact with protein factors that function in enzymatic processing, targeting, and the membrane insertion of nascent chains at the exit of the ribosomal tunnel. This Oryza sativa subsp. japonica (Rice) protein is Large ribosomal subunit protein uL18y (RPL5B).